The sequence spans 393 residues: Proteasome-activating nucleotidase (393 aa).

Positions 14-53 form a coiled coil; sequence SDEVQLVRLLEEKIKSLQIEIENLRKELNYYKAEMEKMLS. ATP-binding positions include 178–183 and Y317; that span reads GTGKTM. The docks into pockets in the proteasome alpha-ring to cause gate opening stretch occupies residues 391 to 393; that stretch reads KYS.

It belongs to the AAA ATPase family. As to quaternary structure, homohexamer. The hexameric complex has a two-ring architecture resembling a top hat that caps the 20S proteasome core at one or both ends. Upon ATP-binding, the C-terminus of PAN interacts with the alpha-rings of the proteasome core by binding to the intersubunit pockets.

It is found in the cytoplasm. Its function is as follows. ATPase which is responsible for recognizing, binding, unfolding and translocation of substrate proteins into the archaeal 20S proteasome core particle. Is essential for opening the gate of the 20S proteasome via an interaction with its C-terminus, thereby allowing substrate entry and access to the site of proteolysis. Thus, the C-termini of the proteasomal ATPase function like a 'key in a lock' to induce gate opening and therefore regulate proteolysis. Unfolding activity requires energy from ATP hydrolysis, whereas ATP binding alone promotes ATPase-20S proteasome association which triggers gate opening, and supports translocation of unfolded substrates. This Saccharolobus islandicus (strain Y.N.15.51 / Yellowstone #2) (Sulfolobus islandicus) protein is Proteasome-activating nucleotidase.